The sequence spans 215 residues: MAKPLSERFFIPHEIKVMGRWSTEDVEVRDPSLKPYINLEPRLLPHTHGRHAKKHFGKANVHIVERLINKIMRSGGSHYKVAGHFMRREHRSLNSKKVKAYEVVKEAFKIIEKRTGKNPIQVLVWAIENAAPREDTTSVMFGGIRYHVAVDISPMRRLDVALRNIALGASAKCYRTKMSFAEALAEEIILAANKDPKSYAYSKKLEIERIAESSR.

Belongs to the universal ribosomal protein uS7 family. As to quaternary structure, part of the 30S ribosomal subunit.

In terms of biological role, one of the primary rRNA binding proteins, it binds directly to 16S rRNA where it nucleates assembly of the head domain of the 30S subunit. Is located at the subunit interface close to the decoding center. This chain is Small ribosomal subunit protein uS7, found in Pyrococcus abyssi (strain GE5 / Orsay).